A 432-amino-acid polypeptide reads, in one-letter code: Protein ABHD8 (432 aa).

Disordered stretches follow at residues 47–69 and 121–149; these read KHAG…QGDQ and PAGS…RPKR. Pro residues predominate over residues 52 to 61; it reads APAPTPPPPL. Residues 139–149 are compositionally biased toward basic residues; the sequence is GRRRRARRPKR. The AB hydrolase-1 domain occupies 170–272; the sequence is VLFFIHGVGG…HKVIMINGGG (103 aa). Active-site charge relay system residues include serine 245, aspartate 363, and histidine 391.

Belongs to the AB hydrolase superfamily. Interacts with NLRP3 (via NACHT and LLR domains); this interaction is enhanced in the presence of NLRP3 inflammasome inducers, such as ATP, nigericin, silica, or alum. Interacts with ZDHHC12.

It is found in the cytoplasm. Its function is as follows. Negatively regulates NLRP3-driven inflammation. Promotes NLRP3 degradation through the chaperone-mediated autophagy (CMA) pathway, hence attenuating inflammasome activation and IL1B secretion. Acts by recruiting palmitoyltransferase ZDHHC12 to NLRP3, facilitating NLRP3 palmitoylation and subsequent degradation. This Bos taurus (Bovine) protein is Protein ABHD8.